Consider the following 354-residue polypeptide: 3-dehydroquinate synthase (354 aa).

NAD(+)-binding positions include 66–71 (SGETSK), 100–104 (GATGD), 124–125 (TT), Lys136, Lys145, and 163–166 (FLET). Zn(2+) contacts are provided by Glu178, His242, and His256.

This sequence belongs to the sugar phosphate cyclases superfamily. Dehydroquinate synthase family. NAD(+) is required as a cofactor. The cofactor is Co(2+). Zn(2+) serves as cofactor.

The protein resides in the cytoplasm. It catalyses the reaction 7-phospho-2-dehydro-3-deoxy-D-arabino-heptonate = 3-dehydroquinate + phosphate. The protein operates within metabolic intermediate biosynthesis; chorismate biosynthesis; chorismate from D-erythrose 4-phosphate and phosphoenolpyruvate: step 2/7. Its function is as follows. Catalyzes the conversion of 3-deoxy-D-arabino-heptulosonate 7-phosphate (DAHP) to dehydroquinate (DHQ). In Staphylococcus epidermidis (strain ATCC 35984 / DSM 28319 / BCRC 17069 / CCUG 31568 / BM 3577 / RP62A), this protein is 3-dehydroquinate synthase.